The chain runs to 488 residues: Neisserial heparin binding antigen (488 aa).

A signal peptide spans 1 to 17 (MFKRSVIAMACIFALSA). A lipid anchor (N-palmitoyl cysteine) is attached at C18. The S-diacylglycerol cysteine moiety is linked to residue C18. Residues 21 to 201 (GGGGSPDVKS…NPAPANGGSN (181 aa)) are disordered. Positions 43-53 (SEKETEAKEDA) are enriched in basic and acidic residues. The segment covering 54–70 (PQAGSQGQGAPSAQGSQ) has biased composition (low complexity). Polar residues-rich tracts occupy residues 101–118 (DMPQNAAGTDSSTPNHTP) and 127–142 (MENQATDAGESSQPAN). Over residues 160–183 (AGGQNAGNTAAQGANQAGNNQAAG) the composition is skewed to low complexity. Positions 296-306 (RFRRSARSRRS) match the Arg-rich motif motif. The segment at 306 to 488 (SLPAEMPLIP…GVFAGKKEQD (183 aa)) is C1 fragment.

Belongs to the NHBA family. In terms of assembly, the C-terminal beta-barrel forms a monomer. Post-translationally, cleaved in vivo by the Neisserial phase-variable autotransporter/serine protease NalP to give 2 fragments. The N-terminus remains in the cell outer membrane while the 22 kDa C-terminus (beginning on Ser-293) is soluble; this soluble fragment is called C2. Cleaved in vitro by human lactoferrin (LTF, between Arg-305 and Ser-306), this fragment is called C1. Cleavage by NalP or lactoferrin does not alter killing of Neisseria by bactericidal antibodies in vitro. Recombinant and cell surface protein is cleaved by human saliva kallikrein (KLK1) between Ser-303 and Arg-304; in saliva kallikrein is more active on NHBA than lactoferrin. Human plasma kallikrein (KLKB1) cleaves in a similar manner to KLK1.

Its subcellular location is the cell outer membrane. The protein resides in the cell surface. It localises to the host mitochondrion. Functionally, a major human immunogenic protein detected in patients recovering from meningitidis, where it induces bactericidal antibodies. Binds heparin and heparan sulfate proteoglycan in vitro via the Arg-rich motif. Heparin-binding to this protein protects bacteria against killing by bactericidal antibodies (serum killing). Binds to human cells via the Arg-rich region; binding may require the intact protein as protein fragments do not bind to human cells. Protein binding to human cells is abolished by treatment with heparinase III but not chondroitinase ABC. The bacteria binds a number of human extracellular sialyated and/or sulfated glycans via this protein, including chondroitin sulfate (KD=5.2 nM), heparin (KD=52 nM) and ganglioside GT3 (KD=210 nM). The recombinant protein binds DNA non-specifically. In terms of biological role, plays a role in extracellular-DNA (eDNA) mediated biofilm formation. In strain MC58 eDNA stimulates biofilm formation. When NHBA is not processed by NalP there is an increase in positively charged, NHBA- and IgA-derived DNA-binding peptides on the cell surface, resulting in increased DNA-binding peptides and increased biofilm formation. Its function is as follows. [C2 fragment] Localizes to host mitochondria when applied to the apical side of human endothelial cell layers, where it induces production of reactive oxygen species which lead to increased permeability of host endothelial cells. The C1 fragment (which lacks the first 14 residues of C2) does not have this effect. It is not known if this occurs during Neisseria infections. This is Neisserial heparin binding antigen from Neisseria meningitidis serogroup B (strain ATCC BAA-335 / MC58).